Here is a 528-residue protein sequence, read N- to C-terminus: Major facilitator superfamily multidrug transporter mdr3 (528 aa).

Residues 1–37 form a disordered region; sequence MLAMAASAEETNRQSNAGRRSVISPSEAPPEAEQSDV. The next 7 membrane-spanning stretches (helical) occupy residues 50–70, 91–111, 119–139, 149–169, 180–200, 211–231, and 241–261; these read FILI…YILI, WHVG…GKLG, ILVL…CSAF, ARAL…AIAG, MIFS…GVVG, WVMW…LWVI, and AATL…LLLL. Asparagine 262 is a glycosylation site (N-linked (GlcNAc...) asparagine). A run of 5 helical transmembrane segments spans residues 272–292, 340–360, 375–395, 410–430, and 448–468; these read GWST…LGLF, VITS…GCIL, FWSF…STTI, SLVN…AGTV, and ALWS…VFAV.

The protein belongs to the major facilitator superfamily.

It is found in the cell membrane. In terms of biological role, major facilitator superfamily transporter that confers resistance to azoles such as itraconazole. This chain is Major facilitator superfamily multidrug transporter mdr3, found in Aspergillus fumigatus (strain ATCC MYA-4609 / CBS 101355 / FGSC A1100 / Af293) (Neosartorya fumigata).